The sequence spans 1032 residues: Connector enhancer of kinase suppressor of ras 2 (1032 aa).

In terms of domain architecture, SAM spans 11 to 76 (WSPSQVVDWM…LEAVDLLCAL (66 aa)). Position 12 is a phosphoserine (S12). Residues 84–178 (NLKTLSHKLN…TIVQQDCTVY (95 aa)) form the CRIC domain. The PDZ domain occupies 215-297 (VIQLANIKPS…GVILTLKKRP (83 aa)). Residues 324–340 (RSPTSSVATPSSTISTP) show a composition bias toward low complexity. The interval 324–349 (RSPTSSVATPSSTISTPTKRDSSALQ) is disordered. In terms of domain architecture, DUF1170 spans 332-515 (TPSSTISTPT…PTHYSLLPSL (184 aa)). S338 and S390 each carry phosphoserine. The segment at 480–509 (EEYMFQRNSKKDTGKKSKKKGDKSTSPTHY) is disordered. A PH domain is found at 570–669 (RGDCEGWLWK…WLNRINMLTA (100 aa)). A disordered region spans residues 682-766 (DYWSESDKEE…PIRKTASQRR (85 aa)). Phosphotyrosine is present on Y683. Positions 683-693 (YWSESDKEEAD) are enriched in acidic residues. Phosphoserine occurs at positions 685 and 687. Pro residues predominate over residues 701-714 (DSPPPPYDTYPRPP). Residues 730–740 (LSSTETSQSQS) show a composition bias toward low complexity. S756 and S767 each carry phosphoserine. A disordered region spans residues 866–900 (DPQDDIQPPEVEEEEEEEEEEAAGENIGEKNENRE). Residues 874-917 (PEVEEEEEEEEEEAAGENIGEKNENREEKLGDSLQDLYRALEEA) adopt a coiled-coil conformation. Positions 875–888 (EVEEEEEEEEEEAA) are enriched in acidic residues. S906 is modified (phosphoserine).

This sequence belongs to the CNKSR family. As to quaternary structure, interacts with RAF1, RAB2L and RAL GTPase proteins. Interacts with DLG4 and AIP1. In terms of processing, phosphorylated on tyrosine. In terms of tissue distribution, expressed in neurons and localized in the cell body and neurites.

The protein localises to the cytoplasm. It localises to the membrane. In terms of biological role, may function as an adapter protein or regulator of Ras signaling pathways, in synaptic junctions. This chain is Connector enhancer of kinase suppressor of ras 2 (Cnksr2), found in Rattus norvegicus (Rat).